The primary structure comprises 160 residues: MQFMLLFSRQGKLRLQKWYVPLSDKEKKKITRELVQTVLARKPKMCSFLEWRDLKIVYKRYASLYFCCAIEDQDNELITLEIIHRYVELLDKYFGSVCELDIIFNFEKAYFILDEFLLGGEVQETSKKNVLKAIEQADLLQEDAKEAETPRSVLEEIGLT.

Belongs to the adaptor complexes small subunit family. In terms of assembly, adaptor protein complex 1 (AP-1) is a heterotetramer composed of two large adaptins (gamma-type subunit AP1G1 and beta-type subunit AP1B1), a medium adaptin (mu-type subunit AP1M1 or AP1M2) and a small adaptin (sigma-type subunit AP1S1 or AP1S2 or AP1S3). Binds to MUC1. In terms of tissue distribution, widely expressed.

Its subcellular location is the golgi apparatus. The protein localises to the cytoplasmic vesicle membrane. It localises to the membrane. It is found in the clathrin-coated pit. Its function is as follows. Subunit of clathrin-associated adaptor protein complex 1 that plays a role in protein sorting in the late-Golgi/trans-Golgi network (TGN) and/or endosomes. The AP complexes mediate both the recruitment of clathrin to membranes and the recognition of sorting signals within the cytosolic tails of transmembrane cargo molecules. The chain is AP-1 complex subunit sigma-2 (Ap1s2) from Mus musculus (Mouse).